The primary structure comprises 113 residues: Hydrogenase maturation factor HypA (113 aa).

His-2 contributes to the Ni(2+) binding site. Positions 73, 76, 89, and 92 each coordinate Zn(2+).

The protein belongs to the HypA/HybF family.

In terms of biological role, involved in the maturation of [NiFe] hydrogenases. Required for nickel insertion into the metal center of the hydrogenase. This is Hydrogenase maturation factor HypA from Chlorobaculum parvum (strain DSM 263 / NCIMB 8327) (Chlorobium vibrioforme subsp. thiosulfatophilum).